The primary structure comprises 253 residues: MSWIPFKIGQPKKQIVSKTVERDFEREYGKLQQLEEQTKRLQKDMKKSTDADLAMSKSAVKISQDLLSNPLCEQDQDFLHMVTALDTAMKRMDAFNQEKVNQIQKTVIEPLKKFSSIFPSLNMAVKRREQALQDYGRLQAKVEKYEEKEKTGPVLAKLHQAREELRPVREDFEAKNKQLLDEMPRFYGSRLDYFQPSFESLIRAQVIYYSEMHKIFGDLTQQLDQPGHSDEQRERENETKLSELRALSIVADD.

Residues 9–232 (GQPKKQIVSK…LDQPGHSDEQ (224 aa)) enclose the BAR domain. Coiled coils occupy residues 16–57 (VSKT…AMSK) and 120–151 (SLNMAVKRREQALQDYGRLQAKVEKYEEKEKT). The segment at 222-241 (QLDQPGHSDEQRERENETKL) is disordered. The segment covering 227-241 (GHSDEQRERENETKL) has biased composition (basic and acidic residues).

The protein localises to the cytoplasm. It is found in the cytoskeleton. Involved in cytokinesis and septation where it has a role in the localization of F-actin. The sequence is that of Bridging integrator 3 (Bin3) from Mus musculus (Mouse).